The sequence spans 384 residues: Flap endonuclease 1 (384 aa).

The segment at 1 to 105 (MGIKKLTDLI…GELAKRQARR (105 aa)) is N-domain. Asp34 lines the Mg(2+) pocket. A DNA-binding site is contributed by Arg71. Mg(2+) is bound by residues Asp87, Glu159, Glu161, Asp180, and Asp182. An I-domain region spans residues 123–254 (EVQKFAKRVI…KRAIELIQKH (132 aa)). Glu159 is a binding site for DNA. DNA is bound by residues Gly232 and Asp234. Mg(2+) is bound at residue Asp234. The interaction with PCNA stretch occupies residues 338-346 (VQSRMDSFI). The disordered stretch occupies residues 349-384 (IKKPEDPNDKKKKVTKTPSKPSAKTSKKSSSTFKRK). The span at 364-384 (KTPSKPSAKTSKKSSSTFKRK) shows a compositional bias: low complexity.

It belongs to the XPG/RAD2 endonuclease family. FEN1 subfamily. Interacts with PCNA. Three molecules of repg bind to one PCNA trimer with each molecule binding to one PCNA monomer. PCNA stimulates the nuclease activity without altering cleavage specificity. It depends on Mg(2+) as a cofactor. Phosphorylated. Phosphorylation upon DNA damage induces relocalization to the nuclear plasma.

Its subcellular location is the nucleus. The protein localises to the nucleolus. The protein resides in the nucleoplasm. It localises to the mitochondrion. Its function is as follows. Structure-specific nuclease with 5'-flap endonuclease and 5'-3' exonuclease activities involved in DNA replication and repair. During DNA replication, cleaves the 5'-overhanging flap structure that is generated by displacement synthesis when DNA polymerase encounters the 5'-end of a downstream Okazaki fragment. It enters the flap from the 5'-end and then tracks to cleave the flap base, leaving a nick for ligation. Also involved in the long patch base excision repair (LP-BER) pathway, by cleaving within the apurinic/apyrimidinic (AP) site-terminated flap. Acts as a genome stabilization factor that prevents flaps from equilibrating into structures that lead to duplications and deletions. Also possesses 5'-3' exonuclease activity on nicked or gapped double-stranded DNA, and exhibits RNase H activity. Also involved in replication and repair of rDNA and in repairing mitochondrial DNA. The polypeptide is Flap endonuclease 1 (Dictyostelium discoideum (Social amoeba)).